The chain runs to 342 residues: Oxygen-dependent coproporphyrinogen-III oxidase (342 aa).

Ser-107 is a substrate binding site. His-111 and His-121 together coordinate a divalent metal cation. The active-site Proton donor is His-121. 123–125 provides a ligand contact to substrate; it reads NYR. A divalent metal cation is bound by residues His-155 and His-185. The interval 277–312 is important for dimerization; that stretch reads YVEFNLVYDRGTIFGLQTNGRTESILMSLPPLVRWE.

It belongs to the aerobic coproporphyrinogen-III oxidase family. In terms of assembly, homodimer. Requires a divalent metal cation as cofactor.

The protein localises to the cytoplasm. The catalysed reaction is coproporphyrinogen III + O2 + 2 H(+) = protoporphyrinogen IX + 2 CO2 + 2 H2O. Its pathway is porphyrin-containing compound metabolism; protoporphyrin-IX biosynthesis; protoporphyrinogen-IX from coproporphyrinogen-III (O2 route): step 1/1. Functionally, involved in the heme and chlorophyll biosynthesis. Catalyzes the aerobic oxidative decarboxylation of propionate groups of rings A and B of coproporphyrinogen-III to yield the vinyl groups in protoporphyrinogen-IX. This chain is Oxygen-dependent coproporphyrinogen-III oxidase, found in Synechococcus sp. (strain ATCC 27144 / PCC 6301 / SAUG 1402/1) (Anacystis nidulans).